The sequence spans 119 residues: Non-structural protein 3b (119 aa).

A DRBM domain is found at 2–83; that stretch reads DYVSLLNQFW…ARLICEQLQA (82 aa).

In terms of assembly, interacts with host RUNX1 isoform b.

Its subcellular location is the host nucleus. It localises to the host nucleolus. The protein localises to the host mitochondrion. Induces host cell G0/G1 arrest and apoptosis. The polypeptide is Non-structural protein 3b (Tylonycteris pachypus (Lesser bamboo bat)).